A 146-amino-acid polypeptide reads, in one-letter code: uncharacterized protein (146 aa).

In terms of domain architecture, N-acetyltransferase spans 1-120 (MTDKFDANDE…TILKWEKNMD (120 aa)).

This sequence belongs to the acetyltransferase family.

This is an uncharacterized protein from Streptococcus pyogenes serotype M6 (strain ATCC BAA-946 / MGAS10394).